Reading from the N-terminus, the 326-residue chain is Undecaprenyl-phosphate 4-deoxy-4-formamido-L-arabinose transferase (326 aa).

Transmembrane regions (helical) follow at residues 236 to 256 (LSVV…LLIV) and 270 to 290 (VFTL…AMGL).

This sequence belongs to the glycosyltransferase 2 family.

Its subcellular location is the cell inner membrane. The enzyme catalyses UDP-4-deoxy-4-formamido-beta-L-arabinose + di-trans,octa-cis-undecaprenyl phosphate = 4-deoxy-4-formamido-alpha-L-arabinopyranosyl di-trans,octa-cis-undecaprenyl phosphate + UDP. Its pathway is glycolipid biosynthesis; 4-amino-4-deoxy-alpha-L-arabinose undecaprenyl phosphate biosynthesis; 4-amino-4-deoxy-alpha-L-arabinose undecaprenyl phosphate from UDP-4-deoxy-4-formamido-beta-L-arabinose and undecaprenyl phosphate: step 1/2. It participates in bacterial outer membrane biogenesis; lipopolysaccharide biosynthesis. Functionally, catalyzes the transfer of 4-deoxy-4-formamido-L-arabinose from UDP to undecaprenyl phosphate. The modified arabinose is attached to lipid A and is required for resistance to polymyxin and cationic antimicrobial peptides. This chain is Undecaprenyl-phosphate 4-deoxy-4-formamido-L-arabinose transferase, found in Proteus mirabilis (strain HI4320).